Here is a 341-residue protein sequence, read N- to C-terminus: Anthranilate phosphoribosyltransferase (341 aa).

5-phospho-alpha-D-ribose 1-diphosphate is bound by residues Gly82, 85–86 (GD), Thr90, 92–95 (NIST), 110–118 (KHGGRSVSS), and Ser122. Gly82 provides a ligand contact to anthranilate. Ser94 is a binding site for Mg(2+). Arg168 contributes to the anthranilate binding site. 2 residues coordinate Mg(2+): Asp227 and Glu228.

This sequence belongs to the anthranilate phosphoribosyltransferase family. As to quaternary structure, homodimer. Mg(2+) serves as cofactor.

It catalyses the reaction N-(5-phospho-beta-D-ribosyl)anthranilate + diphosphate = 5-phospho-alpha-D-ribose 1-diphosphate + anthranilate. It functions in the pathway amino-acid biosynthesis; L-tryptophan biosynthesis; L-tryptophan from chorismate: step 2/5. In terms of biological role, catalyzes the transfer of the phosphoribosyl group of 5-phosphorylribose-1-pyrophosphate (PRPP) to anthranilate to yield N-(5'-phosphoribosyl)-anthranilate (PRA). This is Anthranilate phosphoribosyltransferase from Nitrosomonas eutropha (strain DSM 101675 / C91 / Nm57).